A 95-amino-acid polypeptide reads, in one-letter code: YcgL domain-containing protein Patl_2802 (95 aa).

The region spanning 4-88 (LLCAVYKSSK…PEENLLKQHL (85 aa)) is the YcgL domain.

This is YcgL domain-containing protein Patl_2802 from Pseudoalteromonas atlantica (strain T6c / ATCC BAA-1087).